A 174-amino-acid polypeptide reads, in one-letter code: Peptide methionine sulfoxide reductase MsrA (174 aa).

Cys11 is an active-site residue.

This sequence belongs to the MsrA Met sulfoxide reductase family.

The catalysed reaction is L-methionyl-[protein] + [thioredoxin]-disulfide + H2O = L-methionyl-(S)-S-oxide-[protein] + [thioredoxin]-dithiol. The enzyme catalyses [thioredoxin]-disulfide + L-methionine + H2O = L-methionine (S)-S-oxide + [thioredoxin]-dithiol. Its function is as follows. Has an important function as a repair enzyme for proteins that have been inactivated by oxidation. Catalyzes the reversible oxidation-reduction of methionine sulfoxide in proteins to methionine. This Haloquadratum walsbyi (strain DSM 16790 / HBSQ001) protein is Peptide methionine sulfoxide reductase MsrA.